The sequence spans 113 residues: N-alpha-acetyltransferase 38, NatC auxiliary subunit (113 aa).

Residues 1-29 are disordered; it reads MAAVLEENGCSRQSSPGAGDSDAEAGDTA. The region spanning 28 to 106 is the Sm domain; sequence TARHKLESLL…IVSIQVELES (79 aa).

It belongs to the snRNP Sm proteins family. As to quaternary structure, component of the N-terminal acetyltransferase C (NatC) complex.

Its subcellular location is the cytoplasm. The protein resides in the nucleus. Functionally, auxillary component of the N-terminal acetyltransferase C (NatC) complex which catalyzes acetylation of N-terminal methionine residues. N-terminal acetylation protects proteins from ubiquitination and degradation by the N-end rule pathway. In Xenopus tropicalis (Western clawed frog), this protein is N-alpha-acetyltransferase 38, NatC auxiliary subunit (naa38).